The following is a 44-amino-acid chain: uncharacterized protein (44 aa).

This is an uncharacterized protein from Methanocaldococcus jannaschii (strain ATCC 43067 / DSM 2661 / JAL-1 / JCM 10045 / NBRC 100440) (Methanococcus jannaschii).